The primary structure comprises 42 residues: Conodipine-M beta chain (42 aa).

As to quaternary structure, heterodimer of an alpha and a beta chains; probably disulfide-linked. Expressed by the venom duct.

The protein resides in the secreted. Heterodimer: conodipine-M catalyzes the calcium-dependent hydrolysis of the 2-acyl groups in 3-sn-phosphoglycerides. This activity may be supported by the alpha chain. Conodipine-M inhibits the binding of isradipine (a ligand specific for L-type calcium channel) to L-type calcium channels. This chain is Conodipine-M beta chain, found in Conus magus (Magical cone).